A 933-amino-acid chain; its full sequence is Protein translocase subunit SecA (933 aa).

Residues Gln-87, 105-109, and Asp-515 each bind ATP; that span reads GEGKT. Disordered stretches follow at residues 567–588, 840–861, and 880–933; these read ESRR…PGSS, DVEA…RHAA, and AAAE…CGKL. The segment covering 845–856 has biased composition (basic and acidic residues); that stretch reads EEQRRQEAERMQ. Positions 880–897 are enriched in low complexity; sequence AAAEGDSAPTGGAQQQSA. Basic and acidic residues predominate over residues 905–914; it reads VAREGPKVGR. Zn(2+) is bound by residues Cys-918, Cys-920, Cys-929, and Cys-930. Basic residues predominate over residues 924 to 933; the sequence is KKYKHCCGKL.

Belongs to the SecA family. In terms of assembly, monomer and homodimer. Part of the essential Sec protein translocation apparatus which comprises SecA, SecYEG and auxiliary proteins SecDF-YajC and YidC. Requires Zn(2+) as cofactor.

The protein resides in the cell inner membrane. Its subcellular location is the cytoplasm. It catalyses the reaction ATP + H2O + cellular proteinSide 1 = ADP + phosphate + cellular proteinSide 2.. Its function is as follows. Part of the Sec protein translocase complex. Interacts with the SecYEG preprotein conducting channel. Has a central role in coupling the hydrolysis of ATP to the transfer of proteins into and across the cell membrane, serving both as a receptor for the preprotein-SecB complex and as an ATP-driven molecular motor driving the stepwise translocation of polypeptide chains across the membrane. The polypeptide is Protein translocase subunit SecA (Halorhodospira halophila (strain DSM 244 / SL1) (Ectothiorhodospira halophila (strain DSM 244 / SL1))).